The chain runs to 246 residues: 2-deoxyglucose-6-phosphate phosphatase 1 (246 aa).

Catalysis depends on aspartate 83, which acts as the Nucleophile. Aspartate 83 serves as a coordination point for Mg(2+). Substrate is bound by residues aspartate 83, glutamate 92, and 146-149 (DVKN). Position 183 (aspartate 183) interacts with Mg(2+).

The protein belongs to the HAD-like hydrolase superfamily. DOG/GPP family. It depends on Mg(2+) as a cofactor.

The catalysed reaction is 2-deoxy-D-glucose 6-phosphate + H2O = 2-deoxy-D-glucose + phosphate. In terms of biological role, phosphatase that is active on 2-deoxy-D-glucose 6-phosphate (2-DOG-6P), as well as on fructose-1-P. The chain is 2-deoxyglucose-6-phosphate phosphatase 1 from Saccharomyces cerevisiae (strain ATCC 204508 / S288c) (Baker's yeast).